Reading from the N-terminus, the 194-residue chain is MDYDKLKGVIEGLLFISGDEGIDAKEISEITEVTEEEVIDLIEDMKADFRRAGRGIQIVEVAKAYQLTTLPEHVPYFERLATSPGQSTLSQAALETLAIVAYKQPLTRSEIEEIRGVKCEKALNTLLSKQLIREAGRAEGIGRPILYATTKEFLEHFGLRELGDLPEPPVNLDIEEARLEASALFGKAEEATND.

This sequence belongs to the ScpB family. As to quaternary structure, homodimer. Homodimerization may be required to stabilize the binding of ScpA to the Smc head domains. Component of a cohesin-like complex composed of ScpA, ScpB and the Smc homodimer, in which ScpA and ScpB bind to the head domain of Smc. The presence of the three proteins is required for the association of the complex with DNA.

It localises to the cytoplasm. Participates in chromosomal partition during cell division. May act via the formation of a condensin-like complex containing Smc and ScpA that pull DNA away from mid-cell into both cell halves. The chain is Segregation and condensation protein B from Brevibacillus brevis (strain 47 / JCM 6285 / NBRC 100599).